Here is a 406-residue protein sequence, read N- to C-terminus: Ubiquitin-like modifier-activating enzyme 5 (406 aa).

Positions 82, 103, 126, 149, and 183 each coordinate ATP. Residues C225 and C228 each contribute to the Zn(2+) site. Residue C249 is the Glycyl thioester intermediate of the active site. Zn(2+) contacts are provided by C302 and C307. The disordered stretch occupies residues 373-397; the sequence is EAPSKSTETTSEATTTTTGDETSLD. The segment covering 378–393 has biased composition (low complexity); sequence STETTSEATTTTTGDE.

It belongs to the ubiquitin-activating E1 family. UBA5 subfamily.

E1-like enzyme which activates UFM1. The chain is Ubiquitin-like modifier-activating enzyme 5 from Drosophila willistoni (Fruit fly).